We begin with the raw amino-acid sequence, 204 residues long: Large ribosomal subunit protein eL15 (204 aa).

This sequence belongs to the eukaryotic ribosomal protein eL15 family. In terms of assembly, component of the large ribosomal subunit.

It is found in the cytoplasm. Component of the large ribosomal subunit. The ribosome is a large ribonucleoprotein complex responsible for the synthesis of proteins in the cell. This chain is Large ribosomal subunit protein eL15 (rpl15), found in Silurus meridionalis (Southern catfish).